A 122-amino-acid chain; its full sequence is Holo-[acyl-carrier-protein] synthase (122 aa).

2 residues coordinate Mg(2+): Asp-9 and Glu-58.

The protein belongs to the P-Pant transferase superfamily. AcpS family. It depends on Mg(2+) as a cofactor.

The protein localises to the cytoplasm. The catalysed reaction is apo-[ACP] + CoA = holo-[ACP] + adenosine 3',5'-bisphosphate + H(+). In terms of biological role, transfers the 4'-phosphopantetheine moiety from coenzyme A to a Ser of acyl-carrier-protein. The sequence is that of Holo-[acyl-carrier-protein] synthase from Chlamydia caviae (strain ATCC VR-813 / DSM 19441 / 03DC25 / GPIC) (Chlamydophila caviae).